The chain runs to 213 residues: ABA-inducible protein PHV A1 (213 aa).

Disordered stretches follow at residues 1-158 (MASN…KDKT) and 182-213 (NTLG…TRNH). A compositionally biased stretch (basic and acidic residues) spans 13 to 23 (GETKARTEEKT). 9 LEA 11-mer repeat repeats span residues 27–37 (MGATKQKAGQT), 38–48 (TEATKQKAGET), 49–59 (AEATKQKTGET), 60–70 (AEAAKQKAAEA), 78–88 (AQAAKDKTYET), 89–99 (AQAAKERAAQG), 111–121 (TEAAKQKAAET), 122–132 (TEAAKQKAAEA), and 133–143 (TEAAKQKASDT). Residues 27–143 (MGATKQKAGQ…EAAKQKASDT (117 aa)) form an 11 X 11 AA tandem repeats of T-E-A-A-K-Q-K-A-A-E-T region. Basic and acidic residues-rich tracts occupy residues 41–74 (TKQK…KDKT), 81–98 (AKDK…RAAQ), and 109–140 (EKTE…KQKA). Residues 193–213 (ATKDATTGATVKDTTTTTRNH) are compositionally biased toward low complexity.

This sequence belongs to the LEA type 4 family.

This chain is ABA-inducible protein PHV A1 (HVA1), found in Hordeum vulgare (Barley).